The primary structure comprises 202 residues: Recombination protein RecR (202 aa).

The segment at 56-71 (CVVCGTVSDKEHCRIC) adopts a C4-type zinc-finger fold. Positions 79 to 179 (TVICVVEEPK…TVSRLASGLP (101 aa)) constitute a Toprim domain.

This sequence belongs to the RecR family.

May play a role in DNA repair. It seems to be involved in an RecBC-independent recombinational process of DNA repair. It may act with RecF and RecO. The polypeptide is Recombination protein RecR (Rhodococcus jostii (strain RHA1)).